Consider the following 82-residue polypeptide: Small ribosomal subunit protein bS16 (82 aa).

This sequence belongs to the bacterial ribosomal protein bS16 family.

The chain is Small ribosomal subunit protein bS16 from Crocosphaera subtropica (strain ATCC 51142 / BH68) (Cyanothece sp. (strain ATCC 51142)).